Consider the following 192-residue polypeptide: Ethylene-responsive transcription factor ERF027 (192 aa).

Residues 18 to 74 (VYRGIRCRSGKWVSEIREPRKTTRIWLGTYPMAEMAAAAYDVAAMALKGREAVLNFP) constitute a DNA-binding region (AP2/ERF). Disordered regions lie at residues 104–132 (CEEGEEEKKAKEKKSSSSKSRARECHVDN) and 167–192 (APPSWMGSRPSDDSPENSNDEDLWGY). Residues 179 to 192 (DSPENSNDEDLWGY) show a composition bias toward acidic residues.

The protein belongs to the AP2/ERF transcription factor family. ERF subfamily.

It is found in the nucleus. In terms of biological role, probably acts as a transcriptional activator. Binds to the GCC-box pathogenesis-related promoter element. May be involved in the regulation of gene expression by stress factors and by components of stress signal transduction pathways. The sequence is that of Ethylene-responsive transcription factor ERF027 (ERF027) from Arabidopsis thaliana (Mouse-ear cress).